A 65-amino-acid polypeptide reads, in one-letter code: Probable tautomerase RSp1151 (65 aa).

P2 functions as the Proton acceptor; via imino nitrogen in the catalytic mechanism.

This sequence belongs to the 4-oxalocrotonate tautomerase family.

The protein is Probable tautomerase RSp1151 of Ralstonia nicotianae (strain ATCC BAA-1114 / GMI1000) (Ralstonia solanacearum).